Consider the following 621-residue polypeptide: Bifunctional 3'-phosphoadenosine 5'-phosphosulfate synthase 2 (621 aa).

Positions 1-216 (MSANFKMNHK…VVELLQEQNI (216 aa)) are adenylyl-sulfate kinase. Position 53–58 (53–58 (GAGKTT)) interacts with ATP. Adenosine 5'-phosphosulfate-binding positions include 80 to 83 (DNVR), phenylalanine 92, 97 to 100 (REEN), 123 to 124 (IS), lysine 162, and 175 to 176 (GF). ATP contacts are provided by residues serine 198, 415–418 (QLRN), 517–521 (GRDPA), and alanine 559. Positions 225–621 (IHELFVPENK…DYYRSLEKTN (397 aa)) are sulfate adenylyltransferase.

This sequence in the N-terminal section; belongs to the APS kinase family. The protein in the C-terminal section; belongs to the sulfate adenylyltransferase family. As to expression, expressed in liver, cartilage, skin and brain.

The catalysed reaction is sulfate + ATP + H(+) = adenosine 5'-phosphosulfate + diphosphate. It catalyses the reaction adenosine 5'-phosphosulfate + ATP = 3'-phosphoadenylyl sulfate + ADP + H(+). It participates in sulfur metabolism; sulfate assimilation. Bifunctional enzyme with both ATP sulfurylase and APS kinase activity, which mediates two steps in the sulfate activation pathway. The first step is the transfer of a sulfate group to ATP to yield adenosine 5'-phosphosulfate (APS), and the second step is the transfer of a phosphate group from ATP to APS yielding 3'-phosphoadenylylsulfate/PAPS, the activated sulfate donor used by sulfotransferases. In mammals, PAPS is the sole source of sulfate while APS appears to only be an intermediate in the sulfate-activation pathway. May have an important role in skeletogenesis during postnatal growth. This is Bifunctional 3'-phosphoadenosine 5'-phosphosulfate synthase 2 (Papss2) from Mus musculus (Mouse).